We begin with the raw amino-acid sequence, 170 residues long: Phosphopantetheine adenylyltransferase (170 aa).

Threonine 10 contributes to the substrate binding site. Residues 10–11 (TF) and histidine 18 contribute to the ATP site. 3 residues coordinate substrate: lysine 42, valine 79, and arginine 93. ATP contacts are provided by residues 94–96 (GLR), glutamate 104, and 129–135 (TQFISST).

This sequence belongs to the bacterial CoaD family. As to quaternary structure, homohexamer. The cofactor is Mg(2+).

The protein localises to the cytoplasm. It carries out the reaction (R)-4'-phosphopantetheine + ATP + H(+) = 3'-dephospho-CoA + diphosphate. It participates in cofactor biosynthesis; coenzyme A biosynthesis; CoA from (R)-pantothenate: step 4/5. In terms of biological role, reversibly transfers an adenylyl group from ATP to 4'-phosphopantetheine, yielding dephospho-CoA (dPCoA) and pyrophosphate. The chain is Phosphopantetheine adenylyltransferase from Parvibaculum lavamentivorans (strain DS-1 / DSM 13023 / NCIMB 13966).